The primary structure comprises 349 residues: MNIQQALNHITKNIHLTQAQMEDVMRSIMQGEATEAQIGALMMGLRMKGESIDEITAAARVMRELAIKIDVSDIQYLVDIVGTGGDGQNLFNVSTASSFVIAAAGATIAKHGNRGVSSKSGSSDLLEQAGINLDLDMQQTERCIREMGVGFLFAPNHHKAMKYAVGPRRELGIRSIFNLLGPLTNPAGVKRFVIGVFSDELCRPIAEVMKQLGAEHVMVVHSKDGLDEISLASQTYIAELKNGEVTEWVLNPEDVNIPSQTLSGLIVEDSNASLKLIKDALGRKKSDIGEKAANMIALNAGAGIYVSGLATSYKQGVALAHDIIYGGQALEKMSILSEFTKALKEYANN.

Residues glycine 82, 85 to 86 (GD), 92 to 95 (NVST), 110 to 118 (KHGNRGVSS), and serine 122 each bind 5-phospho-alpha-D-ribose 1-diphosphate. Glycine 82 is an anthranilate binding site. Serine 94 is a binding site for Mg(2+). Asparagine 113 contacts anthranilate. Arginine 168 contributes to the anthranilate binding site. Mg(2+) contacts are provided by aspartate 227 and glutamate 228.

Belongs to the anthranilate phosphoribosyltransferase family. Homodimer. Mg(2+) serves as cofactor.

It carries out the reaction N-(5-phospho-beta-D-ribosyl)anthranilate + diphosphate = 5-phospho-alpha-D-ribose 1-diphosphate + anthranilate. It functions in the pathway amino-acid biosynthesis; L-tryptophan biosynthesis; L-tryptophan from chorismate: step 2/5. In terms of biological role, catalyzes the transfer of the phosphoribosyl group of 5-phosphorylribose-1-pyrophosphate (PRPP) to anthranilate to yield N-(5'-phosphoribosyl)-anthranilate (PRA). This Acinetobacter baylyi (strain ATCC 33305 / BD413 / ADP1) protein is Anthranilate phosphoribosyltransferase.